The following is a 78-amino-acid chain: U-scoloptoxin(04)-Er1e (78 aa).

Residues 1–24 (MTRHLIFAAMLLVCLFVCWNAVGA) form the signal peptide. Positions 25 to 28 (RDAR) are excised as a propeptide.

It belongs to the scoloptoxin-04 family. Post-translationally, contains 2 disulfide bonds. As to expression, expressed by the venom gland.

The protein resides in the secreted. The polypeptide is U-scoloptoxin(04)-Er1e (Ethmostigmus rubripes (Giant centipede)).